A 439-amino-acid chain; its full sequence is MAVTKLFARYVYDSRGNPTVEVDLTTDKGLFRSIVPSGASTGIHEALELRDGDKSKWLGKGVTKAVANVNELIAPAFVKANLDVTNQSAVDDFLNKLDGTPNKSKLGANAILGVSLATAKAAAAEKNVPLYQHLADISGSKQDKFVLPVPFQNVLNGGSHAGGALAFQEFMIVPTDAPTFSEALRMGSEVYHNLKSLTKKKYGQSAGNVGDEGGVAPDIGSPREALDLIMDAIDKAGYKGKIGIALDVAASEFYKDGKYDLDFKNPNSDESKWLSGEQLASLYEELINEYPIVSIEDPFGEDDWDAWVHFYSKVSSKVQIVGDDLTVTNPLRIKTAIEKKAANALLLKVNQIGSLTESIKAAQDSFDATWGVMVSHRSGETEDTFIADLSVGLRAGQIKTGAPARSERLAKLNQILRIEEELGDKAIYAGKNFHAASQL.

Substrate-binding residues include His-160 and Glu-169. Residue Glu-212 is the Proton donor of the active site. The Mg(2+) site is built by Asp-247, Glu-296, and Asp-323. Glu-296 and Asp-323 together coordinate substrate. Lys-348 functions as the Proton acceptor in the catalytic mechanism. Residues 375–378 (SHRS) and Lys-399 contribute to the substrate site.

It belongs to the enolase family. As to quaternary structure, homodimer. It depends on Mg(2+) as a cofactor.

It localises to the cytoplasm. It catalyses the reaction (2R)-2-phosphoglycerate = phosphoenolpyruvate + H2O. Its pathway is carbohydrate degradation; glycolysis; pyruvate from D-glyceraldehyde 3-phosphate: step 4/5. This Debaryomyces hansenii (strain ATCC 36239 / CBS 767 / BCRC 21394 / JCM 1990 / NBRC 0083 / IGC 2968) (Yeast) protein is Enolase 2 (ENO2).